The chain runs to 346 residues: Probable 3-hydroxyacyl-CoA dehydrogenase (346 aa).

A disordered region spans residues 322 to 346; sequence RANLSPSATPCTPWKARKATSCAPP.

The protein belongs to the 3-hydroxyacyl-CoA dehydrogenase family.

It catalyses the reaction a (3S)-3-hydroxyacyl-CoA + NAD(+) = a 3-oxoacyl-CoA + NADH + H(+). The protein is Probable 3-hydroxyacyl-CoA dehydrogenase of Deinococcus radiodurans (strain ATCC 13939 / DSM 20539 / JCM 16871 / CCUG 27074 / LMG 4051 / NBRC 15346 / NCIMB 9279 / VKM B-1422 / R1).